Here is a 212-residue protein sequence, read N- to C-terminus: Agamous-like MADS-box protein MADS9 (212 aa).

One can recognise an MADS-box domain in the interval 1–61 (MGRGKIEIKR…GKMHEYCSPS (61 aa)). The K-box domain occupies 84-170 (HENLNNELDR…NYIVHHQGMP (87 aa)).

In terms of tissue distribution, expressed during flower development in stamens and petals.

It localises to the nucleus. Probable transcription factor that may play role in specifying stamen and petal organ identity. The sequence is that of Agamous-like MADS-box protein MADS9 from Vitis vinifera (Grape).